Consider the following 490-residue polypeptide: GTPase Der (490 aa).

EngA-type G domains follow at residues 3–166 (PVVA…MDDV) and 203–376 (IKLA…DSST). GTP-binding positions include 9 to 16 (GRPNVGKS), 56 to 60 (DTGGI), 118 to 121 (NKTD), 209 to 216 (GRPNVGKS), 256 to 260 (DTAGV), and 321 to 324 (NKWD). The 85-residue stretch at 377–461 (RRVSTAMLTR…PIRIQFKEGE (85 aa)) folds into the KH-like domain.

Belongs to the TRAFAC class TrmE-Era-EngA-EngB-Septin-like GTPase superfamily. EngA (Der) GTPase family. Associates with the 50S ribosomal subunit.

In terms of biological role, GTPase that plays an essential role in the late steps of ribosome biogenesis. In Salmonella newport (strain SL254), this protein is GTPase Der.